Reading from the N-terminus, the 265-residue chain is Transcriptional activator AggR (265 aa).

The HTH araC/xylS-type domain occupies 164-261 (DKVRNTIEKD…GITPKQFLTY (98 aa)). DNA-binding regions (H-T-H motif) lie at residues 181–202 (AIIA…ESEY) and 228–251 (ISQI…VKHF).

As to quaternary structure, homodimer.

Transcriptional activator of aggregative adherence fimbria I expression in enteroaggregative E.coli. In Escherichia coli, this protein is Transcriptional activator AggR (aggR).